A 305-amino-acid chain; its full sequence is MLKQRTIKSIVKTVGIGVHSGRKIELTLRPAAPGTGIVFSRVDLPTPVDIPAAATSIGDTRLASVLQKDGVRVSTVEHLMSACAGLGIDNLYVDVTAEEIPIMDGSAATFVFLIQSAGIEEQNAPKRFVKVKKTVEIRDGDKFARLDPYFGFKLKFSIDFRHPAVDKTGQELEVDFANTSYVREIARARTFGFAHEAEMLREMGLARGGSMENAIVLDEYRILNNDGLRYDDEFVKHKMLDAIGDLYVIGHPLLASYTAYKSGHGLNNALLRELLANEDAYEIVTFDDPQAAPKGFAFDMQTAFA.

Residues His78, His237, and Asp241 each contribute to the Zn(2+) site. The Proton donor role is filled by His264.

The protein belongs to the LpxC family. The cofactor is Zn(2+).

The catalysed reaction is a UDP-3-O-[(3R)-3-hydroxyacyl]-N-acetyl-alpha-D-glucosamine + H2O = a UDP-3-O-[(3R)-3-hydroxyacyl]-alpha-D-glucosamine + acetate. Its pathway is glycolipid biosynthesis; lipid IV(A) biosynthesis; lipid IV(A) from (3R)-3-hydroxytetradecanoyl-[acyl-carrier-protein] and UDP-N-acetyl-alpha-D-glucosamine: step 2/6. Its function is as follows. Catalyzes the hydrolysis of UDP-3-O-myristoyl-N-acetylglucosamine to form UDP-3-O-myristoylglucosamine and acetate, the committed step in lipid A biosynthesis. The protein is UDP-3-O-acyl-N-acetylglucosamine deacetylase of Burkholderia lata (strain ATCC 17760 / DSM 23089 / LMG 22485 / NCIMB 9086 / R18194 / 383).